The primary structure comprises 78 residues: cAMP-dependent protein kinase inhibitor beta (78 aa).

Over residues 1 to 10 (MRTDSSKMTD) the composition is skewed to basic and acidic residues. Residues 1 to 78 (MRTDSSKMTD…QLEKPQNEEK (78 aa)) form a disordered region. The segment covering 33–42 (IQSSAATDGT) has biased composition (polar residues). The segment covering 53–78 (SVKEDAKEKDEKTTQDQLEKPQNEEK) has biased composition (basic and acidic residues).

The protein belongs to the PKI family.

Functionally, extremely potent competitive inhibitor of cAMP-dependent protein kinase activity, this protein interacts with the catalytic subunit of the enzyme after the cAMP-induced dissociation of its regulatory chains. The polypeptide is cAMP-dependent protein kinase inhibitor beta (PKIB) (Homo sapiens (Human)).